The following is a 182-amino-acid chain: UPF0690 protein C1orf52 homolog (182 aa).

The disordered stretch occupies residues 1–61 (MAAEEKDPLS…AEKRLPGPDE (61 aa)). A compositionally biased stretch (acidic residues) spans 23 to 32 (SDEEDNSEPE). Residues 51–61 (KAEKRLPGPDE) are compositionally biased toward basic and acidic residues. Phosphothreonine is present on threonine 67. Tyrosine 132 bears the Phosphotyrosine mark. The segment at 132–182 (YEDNGDDAPQNAKKARLLPEGEETVESDDEKDEHTSKKRKIELGEPTKKKK) is disordered. A compositionally biased stretch (acidic residues) spans 151–162 (EGEETVESDDEK). At serine 158 the chain carries Phosphoserine. The span at 172–182 (IELGEPTKKKK) shows a compositional bias: basic and acidic residues.

It belongs to the UPF0690 family.

This is UPF0690 protein C1orf52 homolog from Bos taurus (Bovine).